The chain runs to 171 residues: Ribosome maturation factor RimM (171 aa).

The 75-residue stretch at 96 to 170 (PDSYYHFQLE…TMTVRLPDGL (75 aa)) folds into the PRC barrel domain.

Belongs to the RimM family. As to quaternary structure, binds ribosomal protein uS19.

The protein resides in the cytoplasm. Functionally, an accessory protein needed during the final step in the assembly of 30S ribosomal subunit, possibly for assembly of the head region. Essential for efficient processing of 16S rRNA. May be needed both before and after RbfA during the maturation of 16S rRNA. It has affinity for free ribosomal 30S subunits but not for 70S ribosomes. This chain is Ribosome maturation factor RimM, found in Heliobacterium modesticaldum (strain ATCC 51547 / Ice1).